Here is a 490-residue protein sequence, read N- to C-terminus: Pleckstrin homology domain-containing family O member 2 (490 aa).

Positions 18-119 (MVDKAGWIKK…WIKALNEGIN (102 aa)) constitute a PH domain. Ser164 and Ser167 each carry phosphoserine. The tract at residues 173 to 402 (LDLDVPDSGP…DLLGEGPRHP (230 aa)) is disordered. The segment covering 230–243 (APTPVSASSEVSPE) has biased composition (low complexity). Thr232 bears the Phosphothreonine mark. 3 positions are modified to phosphoserine: Ser235, Ser237, and Ser238. Positions 244–257 (SQEDSETPAEEDSG) are enriched in acidic residues. At Ser273 the chain carries Phosphoserine. The span at 277-297 (PSPQEAPAAESAEPSQAPCSE) shows a compositional bias: low complexity. Thr298 and Thr311 each carry phosphothreonine. Ser390 and Ser468 each carry phosphoserine. The stretch at 439 to 481 (SAETLLSQAVEQLRQATQVLQEMRDLGELSQEAPGLREKRKEL) forms a coiled coil.

This is Pleckstrin homology domain-containing family O member 2 (PLEKHO2) from Homo sapiens (Human).